The following is a 450-amino-acid chain: 23S rRNA (uracil(1939)-C(5))-methyltransferase RlmD (450 aa).

The disordered stretch occupies residues 1 to 22 (MAKHDRGLRFQPAGGSRAPQIP). Residues 20 to 78 (QIPVGKKQRLTIQRLANDGRGIAFVEGRTWFVSGALAGEEVEARVLGSHGKVVEARAER) enclose the TRAM domain. 4 residues coordinate [4Fe-4S] cluster: cysteine 91, cysteine 97, cysteine 100, and cysteine 179. The S-adenosyl-L-methionine site is built by glutamine 283, phenylalanine 312, asparagine 317, glutamate 333, aspartate 360, and aspartate 381. Cysteine 407 acts as the Nucleophile in catalysis.

It belongs to the class I-like SAM-binding methyltransferase superfamily. RNA M5U methyltransferase family. RlmD subfamily.

The enzyme catalyses uridine(1939) in 23S rRNA + S-adenosyl-L-methionine = 5-methyluridine(1939) in 23S rRNA + S-adenosyl-L-homocysteine + H(+). Functionally, catalyzes the formation of 5-methyl-uridine at position 1939 (m5U1939) in 23S rRNA. The polypeptide is 23S rRNA (uracil(1939)-C(5))-methyltransferase RlmD (Pseudomonas fluorescens (strain ATCC BAA-477 / NRRL B-23932 / Pf-5)).